The sequence spans 259 residues: Malonyl-[acyl-carrier protein] O-methyltransferase 2 (259 aa).

Belongs to the methyltransferase superfamily.

It catalyses the reaction malonyl-[ACP] + S-adenosyl-L-methionine = malonyl-[ACP] methyl ester + S-adenosyl-L-homocysteine. The protein operates within cofactor biosynthesis; biotin biosynthesis. Its function is as follows. Converts the free carboxyl group of a malonyl-thioester to its methyl ester by transfer of a methyl group from S-adenosyl-L-methionine (SAM). It allows to synthesize pimeloyl-ACP via the fatty acid synthetic pathway. The protein is Malonyl-[acyl-carrier protein] O-methyltransferase 2 of Ilyobacter polytropus (strain ATCC 51220 / DSM 2926 / LMG 16218 / CuHBu1).